The chain runs to 996 residues: Leucine-rich repeat receptor-like kinase protein THICK TASSEL DWARF1 (996 aa).

An N-terminal signal peptide occupies residues 1–26 (MPPPTFLLGLLLLLLLAAAAPAPASA). LRR repeat units follow at residues 78 to 103 (TSRV…VALL), 104 to 127 (DALA…LASM), 128 to 151 (PALR…PPAA), 153 to 178 (FPAL…APHA), 180 to 201 (SLRY…TFGD), 202 to 226 (LAAL…LSRL), 251 to 275 (LQSL…LARL), 276 to 299 (SRLD…LGAL), 300 to 323 (TSLR…FAAL), 325 to 349 (NLKL…DFPF), 351 to 371 (EVLQ…LGRN), 372 to 395 (GRLK…LCAG), 397 to 419 (NLQL…LGDC), 420 to 443 (KTLT…LFDL), 445 to 466 (QANM…VIAG), 467 to 490 (DKIG…IGNL), 491 to 514 (PALQ…IGRL), 516 to 538 (NLTR…LMGC), 539 to 562 (ASLG…VTSL), 563 to 586 (KILC…MANM), and 587 to 611 (TSLT…QFLV). Residues 646–666 (KKLLVWLVVLLTLLVLAVLGA) traverse the membrane as a helical segment. The Protein kinase domain maps to 703 to 978 (LKEDNIIGKG…TMREVVHMLS (276 aa)). Residues 709–717 (IGKGGAGIV) and Lys731 contribute to the ATP site. Residue Asp828 is the Proton acceptor of the active site.

This sequence belongs to the protein kinase superfamily. Ser/Thr protein kinase family. As to expression, highly expressed in the apex of the vegetative seedlings. Lower expression in young leaves, ears and tassels, embryos and roots. Not expressed in the shoot meristem itself. Detected in the three outermost layers of the inflorescence meristem, and on its flanks at positions of prospective spikelet pair meristems. Not confined to meristematic cells but also detected in primordia of glumes, lemmas and stamens.

The protein localises to the membrane. It carries out the reaction L-seryl-[protein] + ATP = O-phospho-L-seryl-[protein] + ADP + H(+). The catalysed reaction is L-threonyl-[protein] + ATP = O-phospho-L-threonyl-[protein] + ADP + H(+). In terms of biological role, receptor-like kinase protein that regulates meristem size during inflorescence and flower development. Promotes vegetative meristem growth and restricts inflorescence and floral meristem growth. Based on additive and synergistic phenotypes of double mutants, it is probable that unlike CLV1 and CLV2 in A.thaliana, TD1 and FAE2 do not function exclusively in a single pathway. However, KN-1 and TD1 do function in a linear pathway to maintain vegetative meristem homeostasis, but they may interact with different partners during development. This Zea mays (Maize) protein is Leucine-rich repeat receptor-like kinase protein THICK TASSEL DWARF1 (TD1).